The chain runs to 546 residues: Chaperonin GroEL (546 aa).

Residues 30-33 (TLGP), Lys-51, 87-91 (DGTTT), Gly-415, and Asp-497 each bind ATP. A disordered region spans residues 527–546 (PKKDSPAPAMPGGGMGGMDF). Positions 537 to 546 (PGGGMGGMDF) are enriched in gly residues.

The protein belongs to the chaperonin (HSP60) family. Forms a cylinder of 14 subunits composed of two heptameric rings stacked back-to-back. Interacts with the co-chaperonin GroES.

The protein localises to the cytoplasm. The enzyme catalyses ATP + H2O + a folded polypeptide = ADP + phosphate + an unfolded polypeptide.. In terms of biological role, together with its co-chaperonin GroES, plays an essential role in assisting protein folding. The GroEL-GroES system forms a nano-cage that allows encapsulation of the non-native substrate proteins and provides a physical environment optimized to promote and accelerate protein folding. The sequence is that of Chaperonin GroEL from Methylobacterium radiotolerans (strain ATCC 27329 / DSM 1819 / JCM 2831 / NBRC 15690 / NCIMB 10815 / 0-1).